Consider the following 89-residue polypeptide: Small ribosomal subunit protein uS15 (89 aa).

Residues Met1 to Ser24 form a disordered region. Residues Ile11 to Ser20 are compositionally biased toward basic and acidic residues.

The protein belongs to the universal ribosomal protein uS15 family. In terms of assembly, part of the 30S ribosomal subunit. Forms a bridge to the 50S subunit in the 70S ribosome, contacting the 23S rRNA.

Functionally, one of the primary rRNA binding proteins, it binds directly to 16S rRNA where it helps nucleate assembly of the platform of the 30S subunit by binding and bridging several RNA helices of the 16S rRNA. Its function is as follows. Forms an intersubunit bridge (bridge B4) with the 23S rRNA of the 50S subunit in the ribosome. This chain is Small ribosomal subunit protein uS15, found in Thioalkalivibrio sulfidiphilus (strain HL-EbGR7).